Here is a 261-residue protein sequence, read N- to C-terminus: Putative [LysW]-aminoadipate/[LysW]-glutamate kinase (261 aa).

Substrate-binding positions include Gly-35–Gly-36, Arg-62, and Asn-162.

This sequence belongs to the acetylglutamate kinase family. LysZ subfamily.

It localises to the cytoplasm. It catalyses the reaction [amino-group carrier protein]-C-terminal-N-(1,4-dicarboxybutan-1-yl)-L-glutamine + ATP = [amino-group carrier protein]-C-terminal-N-(1-carboxy-5-phosphooxy-5-oxopentan-1-yl)-L-glutamine + ADP. The enzyme catalyses [amino-group carrier protein]-C-terminal-gamma-(L-glutamyl)-L-glutamate + ATP = [amino-group carrier protein]-C-terminal-gamma-(5-phospho-L-glutamyl)-L-glutamate + ADP. It functions in the pathway amino-acid biosynthesis; L-lysine biosynthesis via AAA pathway; L-lysine from L-alpha-aminoadipate (Thermus route): step 2/5. It participates in amino-acid biosynthesis; L-arginine biosynthesis. Its function is as follows. Involved in both the arginine and lysine biosynthetic pathways. Phosphorylates the LysW-bound precursors glutamate (for arginine biosynthesis), respectively alpha-aminoadipate (for lysine biosynthesis). This chain is Putative [LysW]-aminoadipate/[LysW]-glutamate kinase, found in Pyrobaculum calidifontis (strain DSM 21063 / JCM 11548 / VA1).